The chain runs to 202 residues: Protein lin-28 homolog A (202 aa).

Disordered regions lie at residues 1–33 and 100–128; these read MPPA…GSFH and SLQV…RSKG. Over residues 18–29 the composition is skewed to acidic residues; it reads EEEEAASSEEDS. The CSD domain maps to 33-106; the sequence is HGSGVCKWFN…GLESLQVTGP (74 aa). A flexible linker region spans residues 107–130; sequence GGAPCVGSEKKPKGTQKRRSKGDR. 2 consecutive CCHC-type zinc fingers follow at residues 129 to 146 and 151 to 168; these read DRCF…ECQL and KKCH…NCPI. Residues Cys131, Cys134, His139, Cys144, Cys153, Cys156, His161, and Cys166 each contribute to the Zn(2+) site. A disordered region spans residues 170 to 202; that stretch reads AQQLSPGSQGKSTTSTGEEEDMSHTPLLPESTD. Over residues 171-185 the composition is skewed to polar residues; sequence QQLSPGSQGKSTTST. Ser174 is modified (phosphoserine).

It belongs to the lin-28 family. Monomer.

It localises to the cytoplasm. The protein resides in the rough endoplasmic reticulum. The protein localises to the P-body. Its subcellular location is the stress granule. It is found in the nucleus. It localises to the nucleolus. Functionally, RNA-binding protein that inhibits processing of pre-let-7 miRNAs and regulates translation of mRNAs that control developmental timing, pluripotency and metabolism. Seems to recognize a common structural G-quartet (G4) feature in its miRNA and mRNA targets. 'Translational enhancer' that drives specific mRNAs to polysomes and increases the efficiency of protein synthesis. Its association with the translational machinery and target mRNAs results in an increased number of initiation events per molecule of mRNA and, indirectly, in mRNA stabilization. Suppressor of microRNA (miRNA) biogenesis, including that of let-7. Binds specific target miRNA precursors (pre-miRNAs), recognizing an 5'-GGAG-3' motif found in their terminal loop, and recruits uridylyltransferase. This results in the terminal uridylation of target pre-miRNAs. Uridylated pre-miRNAs fail to be processed by Dicer and undergo degradation. Localized to the periendoplasmic reticulum area, binds to a large number of spliced mRNAs and inhibits the translation of mRNAs destined for the ER, reducing the synthesis of transmembrane proteins, ER or Golgi lumen proteins, and secretory proteins. Binds to and enhances the translation of mRNAs for several metabolic enzymes, increasing glycolysis and oxidative phosphorylation. Which, with the let-7 repression may enhance tissue repair in adult tissue. This is Protein lin-28 homolog A (lin28a) from Danio rerio (Zebrafish).